The primary structure comprises 220 residues: Vesicle-associated protein 2-1 (220 aa).

Met-1 is modified (N-acetylmethionine). Over 1–196 (MTGVGENQLI…RNSGNGLSLK (196 aa)) the chain is Cytoplasmic. Position 2 is an N-acetylthreonine; in Vesicle-associated protein 2-1, N-terminally processed (Thr-2). Positions 9-129 (LISIQPDELK…TECKLKVSYI (121 aa)) constitute an MSP domain. Positions 133 to 154 (TTQRSSESGATNGDGQSSETIS) are disordered. Residues 153-188 (ISTIQRLKEERDAAVKQTQQLQHELETVRRRRNQRN) adopt a coiled-coil conformation. The chain crosses the membrane as a helical; Anchor for type IV membrane protein span at residues 197–217 (LAAMVGLIGLIIGFILKLTLA).

It belongs to the VAMP-associated protein (VAP) (TC 9.B.17) family.

Its subcellular location is the endoplasmic reticulum membrane. Its function is as follows. May play a role in vesicle trafficking. This is Vesicle-associated protein 2-1 (PVA21) from Arabidopsis thaliana (Mouse-ear cress).